The sequence spans 283 residues: ATP synthase gamma chain (283 aa).

This sequence belongs to the ATPase gamma chain family. F-type ATPases have 2 components, CF(1) - the catalytic core - and CF(0) - the membrane proton channel. CF(1) has five subunits: alpha(3), beta(3), gamma(1), delta(1), epsilon(1). CF(0) has three main subunits: a, b and c.

It localises to the cell inner membrane. Produces ATP from ADP in the presence of a proton gradient across the membrane. The gamma chain is believed to be important in regulating ATPase activity and the flow of protons through the CF(0) complex. The chain is ATP synthase gamma chain from Ehrlichia ruminantium (strain Gardel).